We begin with the raw amino-acid sequence, 418 residues long: Hydroxysteroid dehydrogenase-like protein 2 (418 aa).

Residues 17-23 (GASRGIG), Lys42, and Asp74 contribute to the NADP(+) site. Lys42 is subject to N6-(2-hydroxyisobutyryl)lysine. Lys116 carries the N6-acetyllysine modification. Catalysis depends on Tyr168, which acts as the Proton acceptor. Residue Lys172 participates in NADP(+) binding. In terms of domain architecture, SCP2 spans 306–415 (RSGAVEETFR…KLEKLMNQMN (110 aa)). Residue Lys318 is modified to N6-succinyllysine.

It belongs to the short-chain dehydrogenases/reductases (SDR) family.

Its subcellular location is the peroxisome. It localises to the mitochondrion. Functionally, has apparently no steroid dehydrogenase activity. Controls bile acid (BA) and lipid metabolism in response to nutritional cues. This Bos taurus (Bovine) protein is Hydroxysteroid dehydrogenase-like protein 2 (HSDL2).